An 857-amino-acid polypeptide reads, in one-letter code: RNA-directed RNA polymerase 2a (857 aa).

One can recognise a RdRp catalytic domain in the interval 511 to 624 (KYCLEIDLSK…FSLLPPVGDS (114 aa)). The span at 780-789 (IERRCDDKRR) shows a compositional bias: basic and acidic residues. Residues 780 to 857 (IERRCDDKRR…PCERGGVTRA (78 aa)) are disordered. Polar residues-rich tracts occupy residues 804–816 (KVSQ…TRSQ) and 824–840 (FESQ…SGWS).

It belongs to the ssRNA positive-strand viruses RNA-directed RNA polymerase family. Interacts with replication protein 1a.

It catalyses the reaction RNA(n) + a ribonucleoside 5'-triphosphate = RNA(n+1) + diphosphate. RNA-dependent RNA polymerase which replicates the viral genome composed of 3 RNA segments, RNA1, RNA2 and RNA3. The sequence is that of RNA-directed RNA polymerase 2a from Cucumber mosaic virus (strain MB-8) (CMV).